The sequence spans 344 residues: Leucine-rich repeat-containing protein 75A (344 aa).

Residues 1 to 25 are disordered; it reads MGTRQTKGSLAERASPGAAPGPRRE. A compositionally biased stretch (low complexity) spans 11–21; sequence AERASPGAAPG. 2 LRR repeats span residues 204 to 217 and 229 to 242; these read VDSVELGFTGLTDD and LPRLTTLALNGNRL. Residues 295 to 344 form a disordered region; sequence LPTILELGEGPGSGEEVREGTVGQEDPGGGPVAPAEDHHEGKETVAAAQT.

It belongs to the LRRC75 family.

This Homo sapiens (Human) protein is Leucine-rich repeat-containing protein 75A (LRRC75A).